A 96-amino-acid polypeptide reads, in one-letter code: MSVKIRLMRLGAKKKPFYRIVVADSRVQRDGKCIEQIGFYNPMVECGAPGFLKVNAERLGYWLGVGAQPTDRVSWFIKKGFIEAQSGSAASTAQEA.

The protein belongs to the bacterial ribosomal protein bS16 family.

The sequence is that of Small ribosomal subunit protein bS16 from Anaplasma phagocytophilum (strain HZ).